A 157-amino-acid polypeptide reads, in one-letter code: NADPH-dependent 7-cyano-7-deazaguanine reductase (157 aa).

C55 acts as the Thioimide intermediate in catalysis. Residue D62 is the Proton donor of the active site. Residues 77–79 and 96–97 contribute to the substrate site; these read VES and HE.

This sequence belongs to the GTP cyclohydrolase I family. QueF type 1 subfamily.

Its subcellular location is the cytoplasm. The enzyme catalyses 7-aminomethyl-7-carbaguanine + 2 NADP(+) = 7-cyano-7-deazaguanine + 2 NADPH + 3 H(+). The protein operates within tRNA modification; tRNA-queuosine biosynthesis. Catalyzes the NADPH-dependent reduction of 7-cyano-7-deazaguanine (preQ0) to 7-aminomethyl-7-deazaguanine (preQ1). This chain is NADPH-dependent 7-cyano-7-deazaguanine reductase, found in Neisseria meningitidis serogroup B (strain ATCC BAA-335 / MC58).